Reading from the N-terminus, the 127-residue chain is Glycine cleavage system H protein (127 aa).

Residues 27–109 (TVRVGITHIA…YGEGWLYEVK (83 aa)) form the Lipoyl-binding domain. The residue at position 68 (K68) is an N6-lipoyllysine.

Belongs to the GcvH family. The glycine cleavage system is composed of four proteins: P, T, L and H. (R)-lipoate is required as a cofactor.

The glycine cleavage system catalyzes the degradation of glycine. The H protein shuttles the methylamine group of glycine from the P protein to the T protein. This Corynebacterium jeikeium (strain K411) protein is Glycine cleavage system H protein.